The primary structure comprises 314 residues: Small ribosomal subunit biogenesis GTPase RsgA (314 aa).

Residues 1–20 (MKRAPTKQPAKPAARGGERA) are disordered. The CP-type G domain occupies 85–246 (SDQFKSKLFA…LIDSPGFQEF (162 aa)). Residues 134–137 (NKID) and 188–196 (GQSGMGKST) each bind GTP. 4 residues coordinate Zn(2+): cysteine 270, cysteine 275, histidine 277, and cysteine 283.

Belongs to the TRAFAC class YlqF/YawG GTPase family. RsgA subfamily. Monomer. Associates with 30S ribosomal subunit, binds 16S rRNA. Zn(2+) serves as cofactor.

The protein resides in the cytoplasm. Its function is as follows. One of several proteins that assist in the late maturation steps of the functional core of the 30S ribosomal subunit. Helps release RbfA from mature subunits. May play a role in the assembly of ribosomal proteins into the subunit. Circularly permuted GTPase that catalyzes slow GTP hydrolysis, GTPase activity is stimulated by the 30S ribosomal subunit. This chain is Small ribosomal subunit biogenesis GTPase RsgA, found in Burkholderia pseudomallei (strain K96243).